We begin with the raw amino-acid sequence, 77 residues long: Small ribosomal subunit protein bS20 (77 aa).

It belongs to the bacterial ribosomal protein bS20 family.

Functionally, binds directly to 16S ribosomal RNA. The sequence is that of Small ribosomal subunit protein bS20 from Streptococcus agalactiae serotype Ia (strain ATCC 27591 / A909 / CDC SS700).